The following is a 198-amino-acid chain: ATP-dependent Clp protease proteolytic subunit (198 aa).

Ser-98 acts as the Nucleophile in catalysis. His-123 is a catalytic residue.

This sequence belongs to the peptidase S14 family. Fourteen ClpP subunits assemble into 2 heptameric rings which stack back to back to give a disk-like structure with a central cavity, resembling the structure of eukaryotic proteasomes.

Its subcellular location is the cytoplasm. The catalysed reaction is Hydrolysis of proteins to small peptides in the presence of ATP and magnesium. alpha-casein is the usual test substrate. In the absence of ATP, only oligopeptides shorter than five residues are hydrolyzed (such as succinyl-Leu-Tyr-|-NHMec, and Leu-Tyr-Leu-|-Tyr-Trp, in which cleavage of the -Tyr-|-Leu- and -Tyr-|-Trp bonds also occurs).. Its function is as follows. Cleaves peptides in various proteins in a process that requires ATP hydrolysis. Has a chymotrypsin-like activity. Plays a major role in the degradation of misfolded proteins. This chain is ATP-dependent Clp protease proteolytic subunit, found in Halothermothrix orenii (strain H 168 / OCM 544 / DSM 9562).